Here is a 647-residue protein sequence, read N- to C-terminus: A-type voltage-gated potassium channel KCND1 (647 aa).

Residues 1–183 are Cytoplasmic-facing; sequence MAAGLATWLP…RAFENPHTST (183 aa). Positions 2–20 are interaction with KCNIP1, KCNIP2, and other family members; it reads AAGLATWLPFARAAAVGWL. H104, C131, and C132 together coordinate Zn(2+). The interval 144–163 is disordered; sequence AERLAEDEEAEQAGDGPALP. A helical membrane pass occupies residues 184 to 205; the sequence is AALVFYYVTGFFIAVSVIANVV. Residues 206–230 are Extracellular-facing; it reads ETIPCRGSARRSSREQPCGERFPQA. The helical transmembrane segment at 231–252 threads the bilayer; it reads FFCMDTACVLIFTGEYLLRLFA. Topologically, residues 253–263 are cytoplasmic; that stretch reads APSRCRFLRSV. A helical transmembrane segment spans residues 264-284; sequence MSLIDVVAILPYYIGLLVPKN. Residues 285 to 287 lie on the Extracellular side of the membrane; sequence DDV. Residues 288-308 form a helical; Voltage-sensor membrane-spanning segment; it reads SGAFVTLRVFRVFRIFKFSRH. Residues 309 to 323 are Cytoplasmic-facing; the sequence is SQGLRILGYTLKSCA. The segment at 310-323 is S4-S5 linker; sequence QGLRILGYTLKSCA. The chain crosses the membrane as a helical span at residues 324-345; the sequence is SELGFLLFSLTMAIIIFATVMF. Residues 346 to 359 are Extracellular-facing; sequence YAEKGTNKTNFTSI. N352 and N355 each carry an N-linked (GlcNAc...) asparagine glycan. The segment at residues 360 to 371 is an intramembrane region (helical); that stretch reads PAAFWYTIVTMT. Residues 372-377 carry the Selectivity filter motif; that stretch reads TLGYGD. Residues 372 to 379 lie within the membrane without spanning it; it reads TLGYGDMV. Residues 380-386 are Extracellular-facing; it reads PSTIAGK. A helical membrane pass occupies residues 387–415; sequence IFGSICSLSGVLVIALPVPVIVSNFSRIY. The Cytoplasmic portion of the chain corresponds to 416 to 647; sequence HQNQRADKRR…FPETVKISSL (232 aa). At S458 the chain carries Phosphoserine. The segment at 474–489 is required for dendritic targeting; that stretch reads FEQQHHHLLHCLEKTT. The segment covering 506–524 has biased composition (low complexity); it reads VSPGGRTSRSTSVSSQPVG. The disordered stretch occupies residues 506–531; that stretch reads VSPGGRTSRSTSVSSQPVGPGSLLSS. Phosphoserine is present on S555. The interval 601 to 634 is disordered; sequence IPTPPANTPDESQPSSPGGGGRAGSTLRNSSLGT.

It belongs to the potassium channel family. D (Shal) (TC 1.A.1.2) subfamily. Kv4.1/KCND1 sub-subfamily. Component of heteromultimeric potassium channels. Identified in potassium channel complexes containing KCND1, KCND2, KCND3, KCNIP1, KCNIP2, KCNIP3, KCNIP4, DPP6 and DPP10. In terms of tissue distribution, widely expressed. Highly expressed in brain, in particular in cerebellum and thalamus; detected at lower levels in the other parts of the brain.

The protein resides in the cell membrane. The catalysed reaction is K(+)(in) = K(+)(out). Its function is as follows. A-type voltage-gated potassium channel that mediates transmembrane potassium transport in excitable membranes in the brain. Mediates A-type current I(SA) in suprachiasmatic nucleus (SCN) neurons. Exhibits a low-threshold A-type current with a hyperpolarized steady-state inactivation midpoint and the recovery process was steeply voltage-dependent, with recovery being markedly faster at more negative potentials. May regulates repetitive firing rates in the suprachiasmatic nucleus (SCN) neurons and circadian rhythms in neuronal excitability and behavior. Contributes to the regulation of the circadian rhythm of action potential firing in suprachiasmatic nucleus neurons, which regulates the circadian rhythm of locomotor activity. The regulatory subunit KCNIP1 modulates the kinetics of channel inactivation, increases the current amplitudes and accelerates recovery from inactivation, shifts activation in a depolarizing direction. The regulatory subunit DPP10 decreases the voltage sensitivity of the inactivation channel gating. The chain is A-type voltage-gated potassium channel KCND1 from Homo sapiens (Human).